We begin with the raw amino-acid sequence, 300 residues long: tRNA dimethylallyltransferase (300 aa).

11–18 (GPTAVGKS) provides a ligand contact to ATP. 13–18 (TAVGKS) contributes to the substrate binding site. Residues 35–38 (DSIQ) form an interaction with substrate tRNA region.

It belongs to the IPP transferase family. As to quaternary structure, monomer. It depends on Mg(2+) as a cofactor.

The enzyme catalyses adenosine(37) in tRNA + dimethylallyl diphosphate = N(6)-dimethylallyladenosine(37) in tRNA + diphosphate. Its function is as follows. Catalyzes the transfer of a dimethylallyl group onto the adenine at position 37 in tRNAs that read codons beginning with uridine, leading to the formation of N6-(dimethylallyl)adenosine (i(6)A). This chain is tRNA dimethylallyltransferase, found in Borrelia turicatae (strain 91E135).